The primary structure comprises 818 residues: Rho GTPase-activating protein 44 (818 aa).

One can recognise a BAR domain in the interval 14-249 (QTVGRAEKTE…IKAQQEAWVE (236 aa)). The Rho-GAP domain maps to 255–445 (KPLEEHLTIS…PIIQHADWFF (191 aa)). Disordered stretches follow at residues 467–493 (ANYS…RPLS), 530–772 (SSAG…SMST), and 789–818 (TLRL…STAL). The segment covering 479 to 489 (PADRRQPEQAR) has biased composition (basic and acidic residues). Position 493 is a phosphoserine (Ser-493). Positions 563–579 (QPLDSPAAPALSPSGLG) are enriched in low complexity. The span at 598 to 611 (GSAQKGSPGSSQGT) shows a compositional bias: polar residues. 2 stretches are compositionally biased toward low complexity: residues 614–641 (AGTQ…DQSP) and 688–708 (SPYG…LSPA). An interaction with BST2 region spans residues 731–818 (KPRQRPTLPP…SEEESESTAL (88 aa)). Residues 746–757 (VNLSASSPQSTE) show a composition bias toward polar residues. Residues 764 to 767 (MSPG) carry the PDZ-binding motif. A compositionally biased stretch (basic and acidic residues) spans 794–809 (PLEHMRRHSVTDKRDS). Position 809 is a phosphoserine (Ser-809). The PDZ-binding motif lies at 815 to 818 (STAL).

Interacts with BST2 (via cytoplasmic domain). Interacts (probably via PDZ-binding motif) with SHANK3 (via PDZ domain); the interaction takes place in dendritic spines and promotes GRIA1 exocytosis. As to expression, highly expressed in brain. Expressed at weak level in other tissues.

The protein resides in the cell projection. It is found in the dendritic spine. Its subcellular location is the recycling endosome. The protein localises to the presynapse. It localises to the dendrite. GTPase-activating protein (GAP) that stimulates the GTPase activity of Rho-type GTPases. Thereby, controls Rho-type GTPases cycling between their active GTP-bound and inactive GDP-bound states. Acts as a GAP at least for CDC42 and RAC1. In neurons, is involved in dendritic spine formation and synaptic plasticity in a specific RAC1-GAP activity. Limits the initiation of exploratory dendritic filopodia. Recruited to actin-patches that seed filopodia, binds specifically to plasma membrane sections that are deformed inward by acto-myosin mediated contractile forces. Acts through GAP activity on RAC1 to reduce actin polymerization necessary for filopodia formation. In association with SHANK3, promotes GRIA1 exocytosis from recycling endosomes and spine morphological changes associated to long-term potentiation. The protein is Rho GTPase-activating protein 44 of Homo sapiens (Human).